Reading from the N-terminus, the 557-residue chain is NADP-dependent malic enzyme (557 aa).

Tyr91 serves as the catalytic Proton donor. Arg144 provides a ligand contact to NADP(+). Lys162 acts as the Proton acceptor in catalysis. Glu234, Asp235, and Asp258 together coordinate a divalent metal cation. Residues Asp258, Gly290–Glu307, and Asn397 each bind NADP(+).

This sequence belongs to the malic enzymes family. As to quaternary structure, homotetramer. The cofactor is Mg(2+). Mn(2+) serves as cofactor.

It localises to the cytoplasm. The catalysed reaction is (S)-malate + NADP(+) = pyruvate + CO2 + NADPH. It catalyses the reaction oxaloacetate + H(+) = pyruvate + CO2. This is NADP-dependent malic enzyme (ME1) from Anas platyrhynchos (Mallard).